The sequence spans 264 residues: tRNA (guanine-N(1)-)-methyltransferase (264 aa).

S-adenosyl-L-methionine is bound by residues Gly120 and 140-145 (IGDYVL).

It belongs to the RNA methyltransferase TrmD family. In terms of assembly, homodimer.

It is found in the cytoplasm. It catalyses the reaction guanosine(37) in tRNA + S-adenosyl-L-methionine = N(1)-methylguanosine(37) in tRNA + S-adenosyl-L-homocysteine + H(+). Functionally, specifically methylates guanosine-37 in various tRNAs. The polypeptide is tRNA (guanine-N(1)-)-methyltransferase (Halorhodospira halophila (strain DSM 244 / SL1) (Ectothiorhodospira halophila (strain DSM 244 / SL1))).